A 337-amino-acid chain; its full sequence is Biotin synthase (337 aa).

The 226-residue stretch at 58–283 (EDVEVEGIVS…RTVLRYAGGR (226 aa)) folds into the Radical SAM core domain. Residues Cys73, Cys77, and Cys80 each coordinate [4Fe-4S] cluster. Cys116, Cys149, Cys208, and Arg278 together coordinate [2Fe-2S] cluster.

Belongs to the radical SAM superfamily. Biotin synthase family. As to quaternary structure, homodimer. Requires [4Fe-4S] cluster as cofactor. It depends on [2Fe-2S] cluster as a cofactor.

The catalysed reaction is (4R,5S)-dethiobiotin + (sulfur carrier)-SH + 2 reduced [2Fe-2S]-[ferredoxin] + 2 S-adenosyl-L-methionine = (sulfur carrier)-H + biotin + 2 5'-deoxyadenosine + 2 L-methionine + 2 oxidized [2Fe-2S]-[ferredoxin]. The protein operates within cofactor biosynthesis; biotin biosynthesis; biotin from 7,8-diaminononanoate: step 2/2. Its function is as follows. Catalyzes the conversion of dethiobiotin (DTB) to biotin by the insertion of a sulfur atom into dethiobiotin via a radical-based mechanism. The sequence is that of Biotin synthase from Pseudarthrobacter chlorophenolicus (strain ATCC 700700 / DSM 12829 / CIP 107037 / JCM 12360 / KCTC 9906 / NCIMB 13794 / A6) (Arthrobacter chlorophenolicus).